Consider the following 254-residue polypeptide: Probable phosphatase TTE1963 (254 aa).

9 residues coordinate Zn(2+): histidine 14, histidine 16, histidine 22, histidine 47, glutamate 80, histidine 108, histidine 139, aspartate 200, and histidine 202.

This sequence belongs to the PHP family. Zn(2+) serves as cofactor.

The chain is Probable phosphatase TTE1963 from Caldanaerobacter subterraneus subsp. tengcongensis (strain DSM 15242 / JCM 11007 / NBRC 100824 / MB4) (Thermoanaerobacter tengcongensis).